Here is a 33-residue protein sequence, read N- to C-terminus: Sucrose-6-phosphate hydrolase (33 aa).

Residue 15-18 (PLQE) coordinates substrate. Glutamate 18 is a catalytic residue.

It belongs to the glycosyl hydrolase 32 family.

The enzyme catalyses Hydrolysis of terminal non-reducing beta-D-fructofuranoside residues in beta-D-fructofuranosides.. It functions in the pathway glycan biosynthesis; sucrose metabolism. In Fusobacterium mortiferum, this protein is Sucrose-6-phosphate hydrolase.